A 240-amino-acid polypeptide reads, in one-letter code: MADS-box transcription factor 27 (240 aa).

Residues 1-61 enclose the MADS-box domain; the sequence is MGRGKIVIRR…GRLYEYSSTS (61 aa). In terms of domain architecture, K-box spans 86–176; it reads LKFWQREAAS…YKKISLIRQE (91 aa). Positions 220 to 231 are enriched in polar residues; that stretch reads LPQHSDAEQSTA. The tract at residues 220-240 is disordered; sequence LPQHSDAEQSTAPKLGLQLNP.

In terms of tissue distribution, ubiquitous.

Its subcellular location is the nucleus. Its function is as follows. Probable transcription factor. This chain is MADS-box transcription factor 27 (MADS27), found in Oryza sativa subsp. japonica (Rice).